The following is a 257-amino-acid chain: Snake venom serine protease KN3 (257 aa).

Residues 1–18 form the signal peptide; the sequence is MVLIRVLANLLILQLSYA. A propeptide spanning residues 19–24 is cleaved from the precursor; that stretch reads QKSSKL. A Peptidase S1 domain is found at 25 to 248; the sequence is VVGGDECNIN…HLDWIKSIIA (224 aa). Intrachain disulfides connect C31-C162, C49-C65, C97-C255, C141-C209, C173-C188, and C199-C224. Residues H64 and D109 each act as charge relay system in the active site. 3 N-linked (GlcNAc...) asparagine glycosylation sites follow: N120, N121, and N164. S203 serves as the catalytic Charge relay system.

This sequence belongs to the peptidase S1 family. Snake venom subfamily. Monomer. Expressed by the venom gland.

It localises to the secreted. Functionally, snake venom serine protease that may act in the hemostasis system of the prey. This chain is Snake venom serine protease KN3, found in Trimeresurus stejnegeri (Chinese green tree viper).